The primary structure comprises 342 residues: Ferredoxin--NADP reductase (342 aa).

FAD contacts are provided by cysteine 17, aspartate 36, glutamine 44, tyrosine 49, isoleucine 89, phenylalanine 124, aspartate 289, and threonine 330.

Belongs to the ferredoxin--NADP reductase type 2 family. In terms of assembly, homodimer. It depends on FAD as a cofactor.

The catalysed reaction is 2 reduced [2Fe-2S]-[ferredoxin] + NADP(+) + H(+) = 2 oxidized [2Fe-2S]-[ferredoxin] + NADPH. This chain is Ferredoxin--NADP reductase, found in Rhodopseudomonas palustris (strain BisA53).